The chain runs to 140 residues: ATP synthase epsilon chain 1 (140 aa).

The protein belongs to the ATPase epsilon chain family. In terms of assembly, F-type ATPases have 2 components, CF(1) - the catalytic core - and CF(0) - the membrane proton channel. CF(1) has five subunits: alpha(3), beta(3), gamma(1), delta(1), epsilon(1). CF(0) has three main subunits: a, b and c.

The protein localises to the cell inner membrane. Its function is as follows. Produces ATP from ADP in the presence of a proton gradient across the membrane. This chain is ATP synthase epsilon chain 1, found in Photobacterium profundum (strain SS9).